The primary structure comprises 122 residues: Large ribosomal subunit protein uL14 (122 aa).

Belongs to the universal ribosomal protein uL14 family. As to quaternary structure, part of the 50S ribosomal subunit. Forms a cluster with proteins L3 and L19. In the 70S ribosome, L14 and L19 interact and together make contacts with the 16S rRNA in bridges B5 and B8.

Binds to 23S rRNA. Forms part of two intersubunit bridges in the 70S ribosome. The protein is Large ribosomal subunit protein uL14 of Clostridium perfringens (strain ATCC 13124 / DSM 756 / JCM 1290 / NCIMB 6125 / NCTC 8237 / Type A).